The chain runs to 111 residues: Probable 4-amino-4-deoxy-L-arabinose-phosphoundecaprenol flippase subunit ArnE (111 aa).

Over 1–35 (MIWLTLVFASLLSVAGQLCQKQATCFVAINKRRKH) the chain is Cytoplasmic. The helical transmembrane segment at 36 to 56 (IVLWLGLALACLGLAMVLWLL) threads the bilayer. Positions 40 to 109 (LGLALACLGL…IIGGIVILGS (70 aa)) constitute an EamA domain. Over 57–60 (VLQN) the chain is Periplasmic. Residues 61-81 (VPVGIAYPMLSLNFVWVTLAA) form a helical membrane-spanning segment. The Cytoplasmic segment spans residues 82-87 (VKLWHE). Residues 88 to 108 (PVSPRHWCGVAFIIGGIVILG) form a helical membrane-spanning segment. At 109–111 (STV) the chain is on the periplasmic side.

The protein belongs to the ArnE family. Heterodimer of ArnE and ArnF.

The protein localises to the cell inner membrane. It functions in the pathway bacterial outer membrane biogenesis; lipopolysaccharide biosynthesis. In terms of biological role, translocates 4-amino-4-deoxy-L-arabinose-phosphoundecaprenol (alpha-L-Ara4N-phosphoundecaprenol) from the cytoplasmic to the periplasmic side of the inner membrane. The polypeptide is Probable 4-amino-4-deoxy-L-arabinose-phosphoundecaprenol flippase subunit ArnE (Escherichia coli (strain ATCC 8739 / DSM 1576 / NBRC 3972 / NCIMB 8545 / WDCM 00012 / Crooks)).